The following is a 21-amino-acid chain: Nigrocin-2 (21 aa).

Residues Cys-15 and Cys-21 are joined by a disulfide bond.

In terms of tissue distribution, expressed by the skin dorsal glands.

The protein localises to the secreted. Its function is as follows. Thanks to its single linear amphipathic alpha-helix, may integrate into membrane phospholipids, leading to lysis of the membrane. Shows antibacterial activity against both Gram-positive and Gram-negative bacteria and against the fungus C.albicans. Has no hemolytic activity. This Pelophylax nigromaculatus (Black-spotted frog) protein is Nigrocin-2.